The sequence spans 217 residues: Kunitz-type trypsin inhibitor-like 2 protein (217 aa).

The signal sequence occupies residues 1 to 26; sequence MKPLSPLTLSFLLFVFITTLSLAFSN. Cystine bridges form between cysteine 70–cysteine 115 and cysteine 168–cysteine 175. Asparagine 191 carries an N-linked (GlcNAc...) asparagine glycan.

This sequence belongs to the protease inhibitor I3 (leguminous Kunitz-type inhibitor) family.

The protein resides in the secreted. Functionally, might act as a protease inhibitor involved in plant defense responses. The chain is Kunitz-type trypsin inhibitor-like 2 protein (PIP20-2) from Pisum sativum (Garden pea).